A 91-amino-acid polypeptide reads, in one-letter code: RNA-binding protein Hfq (91 aa).

The 61-residue stretch at 9 to 69 (DRFLNMLRTG…ISTIMPSSFV (61 aa)) folds into the Sm domain.

The protein belongs to the Hfq family. In terms of assembly, homohexamer.

Functionally, RNA chaperone that binds small regulatory RNA (sRNAs) and mRNAs to facilitate mRNA translational regulation in response to envelope stress, environmental stress and changes in metabolite concentrations. Also binds with high specificity to tRNAs. This Pseudothermotoga lettingae (strain ATCC BAA-301 / DSM 14385 / NBRC 107922 / TMO) (Thermotoga lettingae) protein is RNA-binding protein Hfq.